The following is a 155-amino-acid chain: MSKRNQVSYVRPAEPAFLSRFKERVGYKEGPTVETKKIQPQLPDEDGNHSDKEDEQPQVVVLKKGDLTAEEVMKIKAEIKAAKTDEEPPPADGRIVYRKPVKRSSDEKCSGLTASSKKKKTNEDDVNKQSSVRKNSQKQIKNSSLLSFDSEDENE.

Disordered stretches follow at residues 24–63 and 80–155; these read RVGY…VVLK and KAAK…DENE. S50 is modified (phosphoserine). N6-acetyllysine is present on K108. Over residues 128–147 the composition is skewed to polar residues; that stretch reads KQSSVRKNSQKQIKNSSLLS. Phosphoserine is present on residues S130, S147, and S150.

This is an uncharacterized protein from Mus musculus (Mouse).